The following is a 205-amino-acid chain: DNA-directed RNA polymerase RPB5 homolog (205 aa).

Belongs to the archaeal RpoH/eukaryotic RPB5 RNA polymerase subunit family. In terms of assembly, part of the viral DNA-directed RNA polymerase that consists of 8 polII-like subunits (RPB1, RPB2, RPB3, RPB5, RPB6, RPB7, RPB9, RPB10), a capping enzyme and a termination factor.

It localises to the host cytoplasm. The protein resides in the virion. Its function is as follows. Component of the DNA-directed RNA polymerase (RNAP) that catalyzes the transcription in the cytoplasm of viral DNA into RNA using the four ribonucleoside triphosphates as substrates. The sequence is that of DNA-directed RNA polymerase RPB5 homolog from Ornithodoros (relapsing fever ticks).